The chain runs to 434 residues: Trigger factor (434 aa).

Residues Gly162–Pro247 enclose the PPIase FKBP-type domain.

It belongs to the FKBP-type PPIase family. Tig subfamily.

The protein resides in the cytoplasm. It catalyses the reaction [protein]-peptidylproline (omega=180) = [protein]-peptidylproline (omega=0). Functionally, involved in protein export. Acts as a chaperone by maintaining the newly synthesized protein in an open conformation. Functions as a peptidyl-prolyl cis-trans isomerase. This chain is Trigger factor, found in Methylobacillus flagellatus (strain ATCC 51484 / DSM 6875 / VKM B-1610 / KT).